The following is a 363-amino-acid chain: MQQPMVEFKNVIKKYDDNQILKGIDMALEKGKFYTLLGPSGCGKTTILRIIAGFTNASSGDVLFEGKRMNDLPANKRQVNTVFQDYALFPHLNVFDNVAFGLNLRKVKKSDVEKKVIEALKLVRLGGYEHREISELSGGQQQRVAIARALANEPKVLLLDEPLSALDMKLRKAMQYELRDLQQRLGITFLFVTHDQEEALAMSDEIFVMNEGNVLQSGTPVDIYDEPINHFVADFIGESNILPGKMVADYQVEIVGKVFECADAGMKPNEAVEIVLRPEDLDIVAVNQGQLVVTVDTQLFRGDYYEITAYDDDRNRWLIHSTNPAKDGQQVGLFFEPEDVHVMRFGESEEDFDARLESYEEED.

Positions 6-236 (VEFKNVIKKY…PINHFVADFI (231 aa)) constitute an ABC transporter domain. ATP is bound at residue 38–45 (GPSGCGKT).

Belongs to the ABC transporter superfamily. Spermidine/putrescine importer (TC 3.A.1.11.1) family. As to quaternary structure, the complex is composed of two ATP-binding proteins (PotA), two transmembrane proteins (PotB and PotC) and a solute-binding protein (PotD).

The protein resides in the cell membrane. The enzyme catalyses ATP + H2O + polyamine-[polyamine-binding protein]Side 1 = ADP + phosphate + polyamineSide 2 + [polyamine-binding protein]Side 1.. Part of the ABC transporter complex PotABCD involved in spermidine/putrescine import. Responsible for energy coupling to the transport system. The protein is Spermidine/putrescine import ATP-binding protein PotA of Latilactobacillus sakei subsp. sakei (strain 23K) (Lactobacillus sakei subsp. sakei).